The primary structure comprises 422 residues: Exopolygalacturonase clone GBGE184 (422 aa).

The signal sequence occupies residues 1–31 (MANARSLVAKANNINVGSLILMALVFGSCVA). PbH1 repeat units lie at residues 200–226 (TENV…HLSN), 227–248 (ADNV…SVGR), 250–270 (SNNV…SVGS), 280–301 (VSGI…RIKT), and 310–331 (AVDI…IIDQ). An N-linked (GlcNAc...) asparagine glycan is attached at asparagine 229. Residue aspartate 241 is the Proton donor of the active site. An intrachain disulfide couples cysteine 243 to cysteine 260. Asparagine 252 carries an N-linked (GlcNAc...) asparagine glycan. Histidine 264 is a catalytic residue. N-linked (GlcNAc...) asparagine glycosylation occurs at asparagine 287. Disulfide bonds link cysteine 366–cysteine 372 and cysteine 404–cysteine 420.

It belongs to the glycosyl hydrolase 28 family.

It localises to the secreted. The protein resides in the cell wall. The enzyme catalyses [(1-&gt;4)-alpha-D-galacturonosyl](n) + H2O = alpha-D-galacturonate + [(1-&gt;4)-alpha-D-galacturonosyl](n-1). Functionally, may function in depolymerizing pectin during pollen development, germination, and tube growth. Acts as an exo-polygalacturonase. The chain is Exopolygalacturonase clone GBGE184 (PGA3) from Arabidopsis thaliana (Mouse-ear cress).